We begin with the raw amino-acid sequence, 196 residues long: 7-methyl-GTP pyrophosphatase (196 aa).

Aspartate 72 (proton acceptor) is an active-site residue.

This sequence belongs to the Maf family. YceF subfamily. Requires a divalent metal cation as cofactor.

The protein resides in the cytoplasm. It catalyses the reaction N(7)-methyl-GTP + H2O = N(7)-methyl-GMP + diphosphate + H(+). In terms of biological role, nucleoside triphosphate pyrophosphatase that hydrolyzes 7-methyl-GTP (m(7)GTP). May have a dual role in cell division arrest and in preventing the incorporation of modified nucleotides into cellular nucleic acids. This Neisseria meningitidis serogroup A / serotype 4A (strain DSM 15465 / Z2491) protein is 7-methyl-GTP pyrophosphatase.